Here is a 272-residue protein sequence, read N- to C-terminus: Flagellin (272 aa).

Belongs to the bacterial flagellin family.

It localises to the secreted. The protein resides in the bacterial flagellum. Functionally, flagellin is the subunit protein which polymerizes to form the filaments of bacterial flagella. This Halalkalibacterium halodurans (strain ATCC BAA-125 / DSM 18197 / FERM 7344 / JCM 9153 / C-125) (Bacillus halodurans) protein is Flagellin (hag).